Reading from the N-terminus, the 812-residue chain is Valine--tRNA ligase (812 aa).

A 'HIGH' region motif is present at residues 47 to 57 (PTISGQLHIGH). Residues 536-540 (KMSKS) carry the 'KMSKS' region motif. Residue Lys-539 coordinates ATP.

This sequence belongs to the class-I aminoacyl-tRNA synthetase family. ValS type 2 subfamily. Monomer.

The protein localises to the cytoplasm. The catalysed reaction is tRNA(Val) + L-valine + ATP = L-valyl-tRNA(Val) + AMP + diphosphate. Functionally, catalyzes the attachment of valine to tRNA(Val). As ValRS can inadvertently accommodate and process structurally similar amino acids such as threonine, to avoid such errors, it has a 'posttransfer' editing activity that hydrolyzes mischarged Thr-tRNA(Val) in a tRNA-dependent manner. This is Valine--tRNA ligase from Ehrlichia ruminantium (strain Gardel).